A 272-amino-acid chain; its full sequence is Sulfate transporter CysZ (272 aa).

Transmembrane regions (helical) follow at residues 29 to 49 (FVIM…WLFI), 66 to 86 (WLSF…LLLF), 148 to 168 (IIAL…VPVL), and 219 to 239 (FVPV…TLMW).

Belongs to the CysZ family.

Its subcellular location is the cell inner membrane. High affinity, high specificity proton-dependent sulfate transporter, which mediates sulfate uptake. Provides the sulfur source for the cysteine synthesis pathway. This is Sulfate transporter CysZ from Haemophilus influenzae (strain PittGG).